Reading from the N-terminus, the 482-residue chain is Putative fatty acid desaturase 2-like protein FADS2B (482 aa).

The interval 1 to 31 is disordered; that stretch reads MKFEEKCGDNGSIVGRNQSYPGEKHQPKGKP. Topologically, residues 1–167 are cytoplasmic; that stretch reads MKFEEKCGDN…EAMNMFHANL (167 aa). A Cytochrome b5 heme-binding domain is found at 56 to 132; the sequence is LSMYTWLEIQ…LKPLLIGELA (77 aa). Histidine 90 and histidine 113 together coordinate heme. Residues 168–188 form a helical membrane-spanning segment; that stretch reads GFFFLHFVQILILEVLAWLIV. The Lumenal portion of the chain corresponds to 189-190; sequence YH. Residues 191–211 traverse the membrane as a helical segment; it reads FGSGWPVTMFISFLLTISQAS. The Cytoplasmic portion of the chain corresponds to 212–305; that stretch reads SSFLQHDAGH…YEEQHLYFYK (94 aa). A Histidine box-1 motif is present at residues 217 to 221; it reads HDAGH. Positions 254–258 match the Histidine box-2 motif; it reads HFEQH. A helical transmembrane segment spans residues 306–326; the sequence is VWLPLFMPVYLKLPSMQAMYL. Residues 327–343 are Lumenal-facing; sequence QRYWVCFSLQDITWVSS. The helical transmembrane segment at 344 to 364 threads the bilayer; sequence FYIYFITFGLYYGIFGTMLLI. Topologically, residues 365–482 are cytoplasmic; that stretch reads YLVKFLESPW…AALWADAYYE (118 aa). Positions 421–425 match the Histidine box-3 motif; the sequence is QIEHH.

Belongs to the fatty acid desaturase type 1 family.

It is found in the endoplasmic reticulum membrane. Its pathway is lipid metabolism; polyunsaturated fatty acid biosynthesis. The protein is Putative fatty acid desaturase 2-like protein FADS2B of Homo sapiens (Human).